A 122-amino-acid chain; its full sequence is Large ribosomal subunit protein bL12 (122 aa).

Belongs to the bacterial ribosomal protein bL12 family. In terms of assembly, homodimer. Part of the ribosomal stalk of the 50S ribosomal subunit. Forms a multimeric L10(L12)X complex, where L10 forms an elongated spine to which 2 to 4 L12 dimers bind in a sequential fashion. Binds GTP-bound translation factors.

Its function is as follows. Forms part of the ribosomal stalk which helps the ribosome interact with GTP-bound translation factors. Is thus essential for accurate translation. The sequence is that of Large ribosomal subunit protein bL12 from Pasteurella multocida (strain Pm70).